The following is a 90-amino-acid chain: Co-chaperonin GroES (90 aa).

The protein belongs to the GroES chaperonin family. Heptamer of 7 subunits arranged in a ring. Interacts with the chaperonin GroEL.

It localises to the cytoplasm. Functionally, together with the chaperonin GroEL, plays an essential role in assisting protein folding. The GroEL-GroES system forms a nano-cage that allows encapsulation of the non-native substrate proteins and provides a physical environment optimized to promote and accelerate protein folding. GroES binds to the apical surface of the GroEL ring, thereby capping the opening of the GroEL channel. The protein is Co-chaperonin GroES of Borreliella afzelii (strain PKo) (Borrelia afzelii).